We begin with the raw amino-acid sequence, 304 residues long: WW domain-binding protein 1 (304 aa).

The disordered stretch occupies residues 1 to 26; it reads MARASSRNSSEEAWGSLQAPQQQQSP. 2 short sequence motifs (PPxY motif) span residues 159–162 and 172–176; these read PPAY and PPPPY. Disordered regions lie at residues 206 to 235 and 252 to 304; these read TNVEGVSSQQSALPHQEGEPRAGLSPVHIP and CPCP…GDIP. Over residues 209–218 the composition is skewed to polar residues; the sequence is EGVSSQQSAL.

As to quaternary structure, binds to the WW domain of YAP1, WWP1 and WWP2. Interacts with WWOX. Interacts with NEDD4.

This chain is WW domain-binding protein 1 (Wbp1), found in Mus musculus (Mouse).